A 260-amino-acid polypeptide reads, in one-letter code: Methylthioribulose-1-phosphate dehydratase (260 aa).

The disordered stretch occupies residues 1–26 (MTPPTTGLPAENTTDDNDHLVQSDDP). The span at 16–26 (DNDHLVQSDDP) shows a compositional bias: basic and acidic residues. Cys109 serves as a coordination point for substrate. Residues His127 and His129 each contribute to the Zn(2+) site. Glu154 functions as the Proton donor/acceptor in the catalytic mechanism. His211 lines the Zn(2+) pocket.

The protein belongs to the aldolase class II family. MtnB subfamily. Zn(2+) is required as a cofactor.

It is found in the cytoplasm. The enzyme catalyses 5-(methylsulfanyl)-D-ribulose 1-phosphate = 5-methylsulfanyl-2,3-dioxopentyl phosphate + H2O. It functions in the pathway amino-acid biosynthesis; L-methionine biosynthesis via salvage pathway; L-methionine from S-methyl-5-thio-alpha-D-ribose 1-phosphate: step 2/6. Functionally, catalyzes the dehydration of methylthioribulose-1-phosphate (MTRu-1-P) into 2,3-diketo-5-methylthiopentyl-1-phosphate (DK-MTP-1-P). This is Methylthioribulose-1-phosphate dehydratase from Podospora anserina (strain S / ATCC MYA-4624 / DSM 980 / FGSC 10383) (Pleurage anserina).